A 434-amino-acid chain; its full sequence is Chaperone SurA (434 aa).

Positions 1-22 (MKHSKKIIFALLALAMSNTSMA) are cleaved as a signal peptide. PpiC domains lie at 173-274 (DVEF…KVVD) and 283-383 (VEEV…QLES).

Its subcellular location is the periplasm. The catalysed reaction is [protein]-peptidylproline (omega=180) = [protein]-peptidylproline (omega=0). Functionally, chaperone involved in the correct folding and assembly of outer membrane proteins. Recognizes specific patterns of aromatic residues and the orientation of their side chains, which are found more frequently in integral outer membrane proteins. May act in both early periplasmic and late outer membrane-associated steps of protein maturation. The protein is Chaperone SurA of Shewanella frigidimarina (strain NCIMB 400).